Consider the following 783-residue polypeptide: MPFLPGKMPKPAVCRRPATSFHADLAGGSRYLYWKHNATPSPHPRRPRVFRVQGDTAMDWQGLRFLGESPVDGYVLQNCTYSPSLVALAFLVACLAGYTALDMVERVGNSLSHPRLWQWIGAFCLGSGIWATHFVAMLAFHAPIALRYDLPITGLSLLIAVAASYLTMYMTARPRFGLLPCLLAACCIGLGIAAMHYTGMAAMRSVATQYYQPSLFALSVLIAIGAAFTALAAVPYLRGRRSARYRYMKLIASLLLAGAIAAMHFTGMAALVLSVPAGTPLELQASADSLRLGWLTGVLASAIAACGIWAAWSEKQRERRLSENSRVNALLNQLDHAHASLRQMARYDSLTGLQNRTAFNEVFVQHLENCRLRGKGLAVMFLDLDHFKRINDSLGHDSGDQLLKIVSERIRSVLRDSDVVARFAGDEFCVLADLTQDHEAHILSQRLMQKMKEPIALDGRTLVMTASVGVSLYPNDGEQCEELLKNAGLALHQSKACGRNNAQFFSRQLLVRATQELQMEEELRQALRDDQLELHYQPILALADGEVHQLEALVRWRHPTQGLLGPDRFIGLAEANGMIDQLDDWVLRRACRDLRSLHLAGHERLRVAVNCCASNLGRASLVDEVRHALEQAGLAACFLELEVTEDALMYNIDQTIPLLERLRELGVSLSIDDFGTGYSSLAYLRRLPLDALKVDRSFIMDIPASQRDMEIAQAIIAMAQKLHLKVVAEGVETPQQLAFLRENHCELVQGYLFSRPLPLAALEEFLRAYRFDAAPPLRSLNQA.

The MHYT domain maps to Y81 to S274. 7 helical membrane-spanning segments follow: residues S84–V104, I120–F140, L150–M170, F176–H196, L215–P235, L255–V275, and L292–W312. Topologically, residues S313–A783 are cytoplasmic. The GGDEF domain occupies K375–R507. The EAL domain maps to E516–R770. 3',3'-c-di-GMP-binding residues include Q537, E551, R555, N610, and N615. E551 is a Mg(2+) binding site. N610 serves as a coordination point for Mg(2+). Mg(2+)-binding residues include E642, D672, and D673. Residue D672 coordinates 3',3'-c-di-GMP. A 3',3'-c-di-GMP-binding site is contributed by R696. Mg(2+) is bound at residue E729. 3',3'-c-di-GMP contacts are provided by E732 and Y751.

It depends on Mg(2+) as a cofactor.

It localises to the cell inner membrane. The catalysed reaction is 3',3'-c-di-GMP + H2O = 5'-phosphoguanylyl(3'-&gt;5')guanosine + H(+). With respect to regulation, PDE activity is stimulated by GTP. It could also be stimulated by NO. Displays c-di-GMP-specific phosphodiesterase (PDE) activity. Seems to play a specific role in nitric oxide (NO)-induced biofilm dispersion. Enhanced NbdA synthesis in the presence of NO increases PDE activity, leading to reduced cellular c-di-GMP levels and biofilm dispersion. Does not show diguanylate cyclase (DGC) activity. The chain is Cyclic di-GMP phosphodiesterase NbdA from Pseudomonas aeruginosa (strain ATCC 15692 / DSM 22644 / CIP 104116 / JCM 14847 / LMG 12228 / 1C / PRS 101 / PAO1).